The following is a 274-amino-acid chain: MLSVAARSGPFAPVLSATSRGVAGALRPLVQAAVPATSEPPVLDLKRPFLSRESLSGQAVRRPLVASVGLNVPASVCYSHTDVKVPDFCDYRRPEVLDSTKSSRESSEARKSFSYMVTAVTTVGVAYAAKNAVTQFVSSMSASADVLAMAKIEVKLSDIPEGKNMAFKWRGKPLFVRHRTQKEIEQEAAVELSQLRDPQHDLDRVKKPEWVILIGVCTHLGCVPIANAGDFGGYYCPCHGSHYDASGRIRLGPAPLNLEVPTYEFTSDDMVVVG.

The Mitochondrial matrix segment spans residues 79-103 (SHTDVKVPDFCDYRRPEVLDSTKSS). Residues 104–140 (RESSEARKSFSYMVTAVTTVGVAYAAKNAVTQFVSSM) form a helical membrane-spanning segment. The Mitochondrial intermembrane portion of the chain corresponds to 141–274 (SASADVLAMA…FTSDDMVVVG (134 aa)). Residues 187–272 (EAAVELSQLR…YEFTSDDMVV (86 aa)) enclose the Rieske domain. Positions 217, 219, 236, 239, and 241 each coordinate [2Fe-2S] cluster. Cysteine 222 and cysteine 238 form a disulfide bridge.

It belongs to the Rieske iron-sulfur protein family. Component of the ubiquinol-cytochrome c oxidoreductase (cytochrome b-c1 complex, complex III, CIII), a multisubunit enzyme composed of 11 subunits. The complex is composed of 3 respiratory subunits cytochrome b, cytochrome c1 and Rieske protein UQCRFS1, 2 core protein subunits UQCRC1/QCR1 and UQCRC2/QCR2, and 6 low-molecular weight protein subunits UQCRH/QCR6, UQCRB/QCR7, UQCRQ/QCR8, UQCR10/QCR9, UQCR11/QCR10 and subunit 9, the cleavage product of Rieske protein UQCRFS1. The complex exists as an obligatory dimer and forms supercomplexes (SCs) in the inner mitochondrial membrane with NADH-ubiquinone oxidoreductase (complex I, CI) and cytochrome c oxidase (complex IV, CIV), resulting in different assemblies (supercomplex SCI(1)III(2)IV(1) and megacomplex MCI(2)III(2)IV(2)). Incorporation of the Rieske protein UQCRFS1 is the penultimate step in complex III assembly. Interacts with TTC19, which is involved in the clearance of UQCRFS1 fragments. In terms of assembly, component of the ubiquinol-cytochrome c oxidoreductase (cytochrome b-c1 complex, complex III, CIII). Subunit 9 corresponds to the mitochondrial targeting sequence (MTS) of Rieske protein UQCRFS1. It is retained after processing and incorporated inside complex III, where it remains bound to the complex and localizes between the 2 core subunits UQCRC1/QCR1 and UQCRC2/QCR2. [2Fe-2S] cluster is required as a cofactor. Post-translationally, proteolytic processing is necessary for the correct insertion of UQCRFS1 in the complex III dimer. Several fragments are generated during UQCRFS1 insertion, most probably due to the endogenous matrix-processing peptidase (MPP) activity of the 2 core protein subunits UQCRC1/QCR1 and UQCRC2/QCR2, which are homologous to the 2 mitochondrial-processing peptidase (MPP) subunits beta-MPP and alpha-MPP respectively. The action of the protease is also necessary for the clearance of the UQCRFS1 fragments.

It localises to the mitochondrion inner membrane. The enzyme catalyses a quinol + 2 Fe(III)-[cytochrome c](out) = a quinone + 2 Fe(II)-[cytochrome c](out) + 2 H(+)(out). In terms of biological role, component of the ubiquinol-cytochrome c oxidoreductase, a multisubunit transmembrane complex that is part of the mitochondrial electron transport chain which drives oxidative phosphorylation. The respiratory chain contains 3 multisubunit complexes succinate dehydrogenase (complex II, CII), ubiquinol-cytochrome c oxidoreductase (cytochrome b-c1 complex, complex III, CIII) and cytochrome c oxidase (complex IV, CIV), that cooperate to transfer electrons derived from NADH and succinate to molecular oxygen, creating an electrochemical gradient over the inner membrane that drives transmembrane transport and the ATP synthase. The cytochrome b-c1 complex catalyzes electron transfer from ubiquinol to cytochrome c, linking this redox reaction to translocation of protons across the mitochondrial inner membrane, with protons being carried across the membrane as hydrogens on the quinol. In the process called Q cycle, 2 protons are consumed from the matrix, 4 protons are released into the intermembrane space and 2 electrons are passed to cytochrome c. The Rieske protein is a catalytic core subunit containing a [2Fe-2S] iron-sulfur cluster. It cycles between 2 conformational states during catalysis to transfer electrons from the quinol bound in the Q(0) site in cytochrome b to cytochrome c1. Incorporation of UQCRFS1 is the penultimate step in complex III assembly. Its function is as follows. Component of the ubiquinol-cytochrome c oxidoreductase (cytochrome b-c1 complex, complex III, CIII). UQCRFS1 undergoes proteolytic processing once it is incorporated in the complex III dimer. One of the fragments, called subunit 9, corresponds to its mitochondrial targeting sequence (MTS). The proteolytic processing is necessary for the correct insertion of UQCRFS1 in the complex III dimer, but the persistence of UQCRFS1-derived fragments may prevent newly imported UQCRFS1 to be processed and assembled into complex III and is detrimental for the complex III structure and function. In Colobus polykomos (Western black-and-white colobus monkey), this protein is Cytochrome b-c1 complex subunit Rieske, mitochondrial (UQCRFS1).